We begin with the raw amino-acid sequence, 172 residues long: 3-hydroxydecanoyl-[acyl-carrier-protein] dehydratase (172 aa).

Residue His71 is part of the active site.

This sequence belongs to the thioester dehydratase family. FabA subfamily. In terms of assembly, homodimer.

The protein resides in the cytoplasm. It catalyses the reaction a (3R)-hydroxyacyl-[ACP] = a (2E)-enoyl-[ACP] + H2O. The enzyme catalyses (3R)-hydroxydecanoyl-[ACP] = (2E)-decenoyl-[ACP] + H2O. The catalysed reaction is (2E)-decenoyl-[ACP] = (3Z)-decenoyl-[ACP]. Its pathway is lipid metabolism; fatty acid biosynthesis. In terms of biological role, necessary for the introduction of cis unsaturation into fatty acids. Catalyzes the dehydration of (3R)-3-hydroxydecanoyl-ACP to E-(2)-decenoyl-ACP and then its isomerization to Z-(3)-decenoyl-ACP. Can catalyze the dehydratase reaction for beta-hydroxyacyl-ACPs with saturated chain lengths up to 16:0, being most active on intermediate chain length. The polypeptide is 3-hydroxydecanoyl-[acyl-carrier-protein] dehydratase (Klebsiella pneumoniae (strain 342)).